Reading from the N-terminus, the 377-residue chain is Succinyl-diaminopimelate desuccinylase (377 aa).

Histidine 66 contacts Zn(2+). Aspartate 68 is a catalytic residue. Aspartate 99 serves as a coordination point for Zn(2+). Glutamate 133 functions as the Proton acceptor in the catalytic mechanism. Residues glutamate 134, glutamate 163, and histidine 349 each contribute to the Zn(2+) site.

The protein belongs to the peptidase M20A family. DapE subfamily. As to quaternary structure, homodimer. Zn(2+) serves as cofactor. Requires Co(2+) as cofactor.

The enzyme catalyses N-succinyl-(2S,6S)-2,6-diaminopimelate + H2O = (2S,6S)-2,6-diaminopimelate + succinate. The protein operates within amino-acid biosynthesis; L-lysine biosynthesis via DAP pathway; LL-2,6-diaminopimelate from (S)-tetrahydrodipicolinate (succinylase route): step 3/3. Functionally, catalyzes the hydrolysis of N-succinyl-L,L-diaminopimelic acid (SDAP), forming succinate and LL-2,6-diaminopimelate (DAP), an intermediate involved in the bacterial biosynthesis of lysine and meso-diaminopimelic acid, an essential component of bacterial cell walls. This chain is Succinyl-diaminopimelate desuccinylase, found in Legionella pneumophila (strain Paris).